The sequence spans 358 residues: Probable branched-chain-amino-acid aminotransferase (358 aa).

The residue at position 196 (K196) is an N6-(pyridoxal phosphate)lysine.

This sequence belongs to the class-IV pyridoxal-phosphate-dependent aminotransferase family. Pyridoxal 5'-phosphate serves as cofactor.

The catalysed reaction is L-leucine + 2-oxoglutarate = 4-methyl-2-oxopentanoate + L-glutamate. The enzyme catalyses L-isoleucine + 2-oxoglutarate = (S)-3-methyl-2-oxopentanoate + L-glutamate. It catalyses the reaction L-valine + 2-oxoglutarate = 3-methyl-2-oxobutanoate + L-glutamate. Its pathway is amino-acid biosynthesis; L-isoleucine biosynthesis; L-isoleucine from 2-oxobutanoate: step 4/4. It participates in amino-acid biosynthesis; L-leucine biosynthesis; L-leucine from 3-methyl-2-oxobutanoate: step 4/4. The protein operates within amino-acid biosynthesis; L-valine biosynthesis; L-valine from pyruvate: step 4/4. Acts on leucine, isoleucine and valine. The sequence is that of Probable branched-chain-amino-acid aminotransferase (ilvE) from Staphylococcus epidermidis (strain ATCC 35984 / DSM 28319 / BCRC 17069 / CCUG 31568 / BM 3577 / RP62A).